Reading from the N-terminus, the 746-residue chain is Polyribonucleotide nucleotidyltransferase (746 aa).

Positions 490 and 496 each coordinate Mg(2+). The KH domain occupies 557–619 (PRIETMIIGK…ATIDAAVKAI (63 aa)). Positions 629-699 (GEVYEGKISS…KTGKFKLSRK (71 aa)) constitute an S1 motif domain. The tract at residues 701–746 (LLPKPEGYEERPPRPERGERGPRQDRGDRGPRQDRGDRGPRREYRD) is disordered. The segment covering 706-746 (EGYEERPPRPERGERGPRQDRGDRGPRQDRGDRGPRREYRD) has biased composition (basic and acidic residues).

It belongs to the polyribonucleotide nucleotidyltransferase family. The cofactor is Mg(2+).

Its subcellular location is the cytoplasm. It carries out the reaction RNA(n+1) + phosphate = RNA(n) + a ribonucleoside 5'-diphosphate. Involved in mRNA degradation. Catalyzes the phosphorolysis of single-stranded polyribonucleotides processively in the 3'- to 5'-direction. This is Polyribonucleotide nucleotidyltransferase from Parabacteroides distasonis (strain ATCC 8503 / DSM 20701 / CIP 104284 / JCM 5825 / NCTC 11152).